A 492-amino-acid chain; its full sequence is Protein nucleotidyltransferase YdiU (492 aa).

ATP-binding residues include Gly-95, Gly-97, Arg-98, Lys-118, Asp-130, Gly-131, Arg-181, and Arg-188. The active-site Proton acceptor is Asp-257. Residues Asn-258 and Asp-267 each coordinate Mg(2+). Asp-267 provides a ligand contact to ATP. The span at 466–475 (YDDQPEHAEY) shows a compositional bias: basic and acidic residues. A disordered region spans residues 466–492 (YDDQPEHAEYRQPPPPSEKPYQTFCGT).

This sequence belongs to the SELO family. Mg(2+) is required as a cofactor. Requires Mn(2+) as cofactor.

It catalyses the reaction L-seryl-[protein] + ATP = 3-O-(5'-adenylyl)-L-seryl-[protein] + diphosphate. The enzyme catalyses L-threonyl-[protein] + ATP = 3-O-(5'-adenylyl)-L-threonyl-[protein] + diphosphate. The catalysed reaction is L-tyrosyl-[protein] + ATP = O-(5'-adenylyl)-L-tyrosyl-[protein] + diphosphate. It carries out the reaction L-histidyl-[protein] + UTP = N(tele)-(5'-uridylyl)-L-histidyl-[protein] + diphosphate. It catalyses the reaction L-seryl-[protein] + UTP = O-(5'-uridylyl)-L-seryl-[protein] + diphosphate. The enzyme catalyses L-tyrosyl-[protein] + UTP = O-(5'-uridylyl)-L-tyrosyl-[protein] + diphosphate. Nucleotidyltransferase involved in the post-translational modification of proteins. It can catalyze the addition of adenosine monophosphate (AMP) or uridine monophosphate (UMP) to a protein, resulting in modifications known as AMPylation and UMPylation. The chain is Protein nucleotidyltransferase YdiU from Syntrophotalea carbinolica (strain DSM 2380 / NBRC 103641 / GraBd1) (Pelobacter carbinolicus).